The sequence spans 315 residues: Ribosomal large subunit pseudouridine synthase C (315 aa).

The region spanning 20–93 is the S4 RNA-binding domain; that stretch reads QRIDNFLRNQ…TKLNKVAELE (74 aa). Asp145 is a catalytic residue.

The protein belongs to the pseudouridine synthase RluA family.

It carries out the reaction uridine(955/2504/2580) in 23S rRNA = pseudouridine(955/2504/2580) in 23S rRNA. In terms of biological role, responsible for synthesis of pseudouridine from uracil at positions 955, 2504 and 2580 in 23S ribosomal RNA. The protein is Ribosomal large subunit pseudouridine synthase C (rluC) of Vibrio parahaemolyticus serotype O3:K6 (strain RIMD 2210633).